Consider the following 173-residue polypeptide: MTLEEIKMMIREIPDFPKKGIKFKDITPVLKDAQAFNYSIEMLAKALEGRKFDLIAAPEARGFLFGAPLAYRLGVGFVPVRKPGKLPAETLSYEYELEYGTDSLEIHKDAVLEGQRVVIVDDLLATGGTIYASAKLVEKLGGIVDSIIFLSELTFLDGRKKLDGYDIISLIKF.

The protein belongs to the purine/pyrimidine phosphoribosyltransferase family. Homodimer.

The protein resides in the cytoplasm. It carries out the reaction AMP + diphosphate = 5-phospho-alpha-D-ribose 1-diphosphate + adenine. It participates in purine metabolism; AMP biosynthesis via salvage pathway; AMP from adenine: step 1/1. Functionally, catalyzes a salvage reaction resulting in the formation of AMP, that is energically less costly than de novo synthesis. The chain is Adenine phosphoribosyltransferase from Thermoanaerobacter sp. (strain X514).